Reading from the N-terminus, the 171-residue chain is Large ribosomal subunit protein uL10 (171 aa).

The protein belongs to the universal ribosomal protein uL10 family. Part of the ribosomal stalk of the 50S ribosomal subunit. The N-terminus interacts with L11 and the large rRNA to form the base of the stalk. The C-terminus forms an elongated spine to which L12 dimers bind in a sequential fashion forming a multimeric L10(L12)X complex.

Its function is as follows. Forms part of the ribosomal stalk, playing a central role in the interaction of the ribosome with GTP-bound translation factors. The polypeptide is Large ribosomal subunit protein uL10 (Corynebacterium glutamicum (strain R)).